We begin with the raw amino-acid sequence, 393 residues long: GDNF family receptor alpha-like (393 aa).

A signal peptide spans 1 to 19; it reads MLVFIFLAVTLSSENESSS. The Extracellular portion of the chain corresponds to 20–349; it reads QTNDCAHLIQ…LTGFNSFFNG (330 aa). N59, N65, N101, and N115 each carry an N-linked (GlcNAc...) asparagine glycan. Cystine bridges form between C131-C189, C138-C144, C155-C167, C162-C210, C191-C198, C220-C291, C227-C233, C244-C275, C252-C258, C269-C316, and C293-C304. Residues 149-228 are required for interaction with GDF15; the sequence is ALYLKACSAN…TCLSVIHTCR (80 aa). Residues 350–370 form a helical membrane-spanning segment; sequence ELLYVVVCMAVTCGILFLVML. The Cytoplasmic segment spans residues 371 to 393; the sequence is KLRIQSEKRDPSSIEIAGGVIIQ.

This sequence belongs to the GDNFR family. In terms of assembly, interacts (via the extracellular domain) with GDF15 and RET; receptor of GDF15, mediates cellular signaling through interaction with RET after GDF15-binding. Interaction with RET requires previous GDF15-binding. Post-translationally, cleaved and inactivated by MMP14, inhibiting the GDF15-GFRAL aversive response. As to expression, expressed in the brainstem, restricted to cells in the area postrema and the immediately adjacent region of the nucleus tractus solitarius.

The protein resides in the cell membrane. With respect to regulation, specifically inhibited by 3P10 monoclonal antibody. Strongly activated by LY3463251, a long-acting and stable agonist composed of GDF15 conjugated monomeric human IgG4 Fc. Brainstem-restricted receptor for GDF15 hormone, which triggers an aversive response, characterized by nausea, vomiting, and/or loss of appetite in response to various stresses. The aversive response is both required to reduce continuing exposure to those stresses at the time of exposure and to promote avoidance behavior in the future. The GDF15-GFRAL aversive response is triggered by stresses, such as anticancer drugs (camptothecin or cisplatin), cancers or drugs such as metformin. Upon interaction with its ligand, GDF15, mediates the GDF15-induced autophosphorylation and activation of the RET tyrosine kinase receptor, leading to activation of MAPK- and AKT- signaling pathways. Ligand-binding activates GFRAL-expressing neurons localized in the area postrema and nucleus tractus solitarius of the brainstem. The GDF15-GFRAL signal induces expression of genes involved in metabolism, such as lipid metabolism in adipose tissues. This is GDNF family receptor alpha-like (Gfral) from Mus musculus (Mouse).